Here is a 216-residue protein sequence, read N- to C-terminus: Alanyl-tRNA editing protein AlaX-M (216 aa).

Positions 99, 103, and 182 each coordinate Zn(2+).

This sequence belongs to the class-II aminoacyl-tRNA synthetase family. Editing domain AlaX-M subfamily. As to quaternary structure, monomer. Zn(2+) is required as a cofactor.

The protein localises to the cytoplasm. Its function is as follows. Functions in trans to edit the amino acid moiety from mischarged charged Gly-tRNA(Ala) and Ser-tRNA(Ala). This Pyrococcus horikoshii (strain ATCC 700860 / DSM 12428 / JCM 9974 / NBRC 100139 / OT-3) protein is Alanyl-tRNA editing protein AlaX-M (alaXM).